A 205-amino-acid chain; its full sequence is Cytochrome c oxidase subunit 3 (205 aa).

5 consecutive transmembrane segments (helical) span residues 29-49, 73-93, 104-124, 144-164, and 184-204; these read TIVF…MYFV, LAIT…VFAA, WFLI…YEYF, ITTG…VVVL, and SYYW…IYFI.

This sequence belongs to the cytochrome c oxidase subunit 3 family. As to quaternary structure, associates with subunits I, II and IV to form cytochrome c oxidase.

It is found in the cell membrane. The enzyme catalyses 4 Fe(II)-[cytochrome c] + O2 + 8 H(+)(in) = 4 Fe(III)-[cytochrome c] + 2 H2O + 4 H(+)(out). The protein is Cytochrome c oxidase subunit 3 (ctaE) of Corynebacterium efficiens (strain DSM 44549 / YS-314 / AJ 12310 / JCM 11189 / NBRC 100395).